A 514-amino-acid polypeptide reads, in one-letter code: ATP synthase subunit alpha (514 aa).

ATP is bound at residue 170–177 (GDRQIGKT).

This sequence belongs to the ATPase alpha/beta chains family. In terms of assembly, F-type ATPases have 2 components, CF(1) - the catalytic core - and CF(0) - the membrane proton channel. CF(1) has five subunits: alpha(3), beta(3), gamma(1), delta(1), epsilon(1). CF(0) has three main subunits: a(1), b(2) and c(9-12). The alpha and beta chains form an alternating ring which encloses part of the gamma chain. CF(1) is attached to CF(0) by a central stalk formed by the gamma and epsilon chains, while a peripheral stalk is formed by the delta and b chains.

The protein localises to the cell inner membrane. The enzyme catalyses ATP + H2O + 4 H(+)(in) = ADP + phosphate + 5 H(+)(out). Functionally, produces ATP from ADP in the presence of a proton gradient across the membrane. The alpha chain is a regulatory subunit. The chain is ATP synthase subunit alpha from Pseudomonas fluorescens (strain Pf0-1).